Consider the following 474-residue polypeptide: ATP synthase subunit beta (474 aa).

151-158 (GGAGVGKT) serves as a coordination point for ATP.

It belongs to the ATPase alpha/beta chains family. F-type ATPases have 2 components, CF(1) - the catalytic core - and CF(0) - the membrane proton channel. CF(1) has five subunits: alpha(3), beta(3), gamma(1), delta(1), epsilon(1). CF(0) has four main subunits: a(1), b(1), b'(1) and c(9-12).

Its subcellular location is the cell inner membrane. The enzyme catalyses ATP + H2O + 4 H(+)(in) = ADP + phosphate + 5 H(+)(out). Functionally, produces ATP from ADP in the presence of a proton gradient across the membrane. The catalytic sites are hosted primarily by the beta subunits. This Jannaschia sp. (strain CCS1) protein is ATP synthase subunit beta.